Reading from the N-terminus, the 117-residue chain is MSVSQQLSELASKEKTVLYVADQNLEEVLCFPESTDRTTLVQLTDACLHANELAKHLEFGKPLSITNQYSRGSCVLQIAKEKKDGSGMVVSTTIAAHNALRGALKCSNALDQVISQL.

This is an uncharacterized protein from Schizosaccharomyces pombe (strain 972 / ATCC 24843) (Fission yeast).